Reading from the N-terminus, the 422-residue chain is Phospho-N-acetylmuramoyl-pentapeptide-transferase (422 aa).

9 helical membrane passes run Leu-28–Leu-48, Val-71–Leu-91, Leu-95–Phe-115, Ile-136–Val-156, Ala-211–Ala-231, Gly-239–Ser-259, Leu-279–Tyr-299, Ile-313–Leu-333, and Lys-399–Leu-419.

Belongs to the glycosyltransferase 4 family. MraY subfamily. It depends on Mg(2+) as a cofactor.

Its subcellular location is the cell inner membrane. The catalysed reaction is UDP-N-acetyl-alpha-D-muramoyl-L-alanyl-gamma-D-glutamyl-meso-2,6-diaminopimeloyl-D-alanyl-D-alanine + di-trans,octa-cis-undecaprenyl phosphate = di-trans,octa-cis-undecaprenyl diphospho-N-acetyl-alpha-D-muramoyl-L-alanyl-D-glutamyl-meso-2,6-diaminopimeloyl-D-alanyl-D-alanine + UMP. The protein operates within cell wall biogenesis; peptidoglycan biosynthesis. Its function is as follows. Catalyzes the initial step of the lipid cycle reactions in the biosynthesis of the cell wall peptidoglycan: transfers peptidoglycan precursor phospho-MurNAc-pentapeptide from UDP-MurNAc-pentapeptide onto the lipid carrier undecaprenyl phosphate, yielding undecaprenyl-pyrophosphoryl-MurNAc-pentapeptide, known as lipid I. The sequence is that of Phospho-N-acetylmuramoyl-pentapeptide-transferase from Bacteroides thetaiotaomicron (strain ATCC 29148 / DSM 2079 / JCM 5827 / CCUG 10774 / NCTC 10582 / VPI-5482 / E50).